Reading from the N-terminus, the 391-residue chain is ATP phosphoribosyltransferase regulatory subunit (391 aa).

Belongs to the class-II aminoacyl-tRNA synthetase family. HisZ subfamily. Heteromultimer composed of HisG and HisZ subunits.

It is found in the cytoplasm. It functions in the pathway amino-acid biosynthesis; L-histidine biosynthesis; L-histidine from 5-phospho-alpha-D-ribose 1-diphosphate: step 1/9. In terms of biological role, required for the first step of histidine biosynthesis. May allow the feedback regulation of ATP phosphoribosyltransferase activity by histidine. The chain is ATP phosphoribosyltransferase regulatory subunit from Bacillus licheniformis (strain ATCC 14580 / DSM 13 / JCM 2505 / CCUG 7422 / NBRC 12200 / NCIMB 9375 / NCTC 10341 / NRRL NRS-1264 / Gibson 46).